A 355-amino-acid chain; its full sequence is UDP-N-acetylglucosamine--N-acetylmuramyl-(pentapeptide) pyrophosphoryl-undecaprenol N-acetylglucosamine transferase (355 aa).

UDP-N-acetyl-alpha-D-glucosamine-binding positions include Thr-15–Gly-17, Asn-127, Arg-163, Ser-191, Ile-244, Ala-263–Glu-268, and Gln-288.

The protein belongs to the glycosyltransferase 28 family. MurG subfamily.

Its subcellular location is the cell inner membrane. It carries out the reaction di-trans,octa-cis-undecaprenyl diphospho-N-acetyl-alpha-D-muramoyl-L-alanyl-D-glutamyl-meso-2,6-diaminopimeloyl-D-alanyl-D-alanine + UDP-N-acetyl-alpha-D-glucosamine = di-trans,octa-cis-undecaprenyl diphospho-[N-acetyl-alpha-D-glucosaminyl-(1-&gt;4)]-N-acetyl-alpha-D-muramoyl-L-alanyl-D-glutamyl-meso-2,6-diaminopimeloyl-D-alanyl-D-alanine + UDP + H(+). The protein operates within cell wall biogenesis; peptidoglycan biosynthesis. In terms of biological role, cell wall formation. Catalyzes the transfer of a GlcNAc subunit on undecaprenyl-pyrophosphoryl-MurNAc-pentapeptide (lipid intermediate I) to form undecaprenyl-pyrophosphoryl-MurNAc-(pentapeptide)GlcNAc (lipid intermediate II). This is UDP-N-acetylglucosamine--N-acetylmuramyl-(pentapeptide) pyrophosphoryl-undecaprenol N-acetylglucosamine transferase from Citrobacter koseri (strain ATCC BAA-895 / CDC 4225-83 / SGSC4696).